Reading from the N-terminus, the 173-residue chain is uncharacterized protein (173 aa).

This is an uncharacterized protein from Acanthamoeba polyphaga (Amoeba).